A 279-amino-acid polypeptide reads, in one-letter code: Proteasome subunit beta (279 aa).

The propeptide at 1–53 (MSGTAEFPGRIPAPYLEVGSSSFVELLGSVAPELLPGRRPLPPGDMGDAAPHG) is removed in mature form; by autocatalysis. Thr-54 (nucleophile) is an active-site residue.

The protein belongs to the peptidase T1B family. As to quaternary structure, the 20S proteasome core is composed of 14 alpha and 14 beta subunits that assemble into four stacked heptameric rings, resulting in a barrel-shaped structure. The two inner rings, each composed of seven catalytic beta subunits, are sandwiched by two outer rings, each composed of seven alpha subunits. The catalytic chamber with the active sites is on the inside of the barrel. Has a gated structure, the ends of the cylinder being occluded by the N-termini of the alpha-subunits. Is capped by the proteasome-associated ATPase, ARC.

The protein localises to the cytoplasm. The catalysed reaction is Cleavage of peptide bonds with very broad specificity.. The protein operates within protein degradation; proteasomal Pup-dependent pathway. Its activity is regulated as follows. The formation of the proteasomal ATPase ARC-20S proteasome complex, likely via the docking of the C-termini of ARC into the intersubunit pockets in the alpha-rings, may trigger opening of the gate for substrate entry. Interconversion between the open-gate and close-gate conformations leads to a dynamic regulation of the 20S proteasome proteolysis activity. Its function is as follows. Component of the proteasome core, a large protease complex with broad specificity involved in protein degradation. The polypeptide is Proteasome subunit beta (Stackebrandtia nassauensis (strain DSM 44728 / CIP 108903 / NRRL B-16338 / NBRC 102104 / LLR-40K-21)).